Consider the following 165-residue polypeptide: Endoribonuclease YbeY (165 aa).

3 residues coordinate Zn(2+): His130, His134, and His140.

The protein belongs to the endoribonuclease YbeY family. It depends on Zn(2+) as a cofactor.

Its subcellular location is the cytoplasm. Single strand-specific metallo-endoribonuclease involved in late-stage 70S ribosome quality control and in maturation of the 3' terminus of the 16S rRNA. The protein is Endoribonuclease YbeY of Streptococcus sanguinis (strain SK36).